A 40-amino-acid polypeptide reads, in one-letter code: Biotin carboxylase (40 aa).

Positions 1–40 (ILVANRGEIAVRLLEEAPSPALTPELRITAYLPSGGPFVR) constitute a Biotin carboxylation domain. An ATP-grasp domain is found at 13 to 27 (LLEEAPSPALTPELR).

Acetyl-CoA carboxylase is a heterohexamer of biotin carboxyl carrier protein, biotin carboxylase and the two subunits of carboxyl transferase in a 2:2 complex. It depends on Mg(2+) as a cofactor. Mn(2+) is required as a cofactor.

The catalysed reaction is N(6)-biotinyl-L-lysyl-[protein] + hydrogencarbonate + ATP = N(6)-carboxybiotinyl-L-lysyl-[protein] + ADP + phosphate + H(+). The protein operates within lipid metabolism; malonyl-CoA biosynthesis; malonyl-CoA from acetyl-CoA: step 1/1. Functionally, this protein is a component of the acetyl coenzyme A carboxylase complex; first, biotin carboxylase catalyzes the carboxylation of the carrier protein and then the transcarboxylase transfers the carboxyl group to form malonyl-CoA. This is Biotin carboxylase from Populus euphratica (Euphrates poplar).